Reading from the N-terminus, the 188-residue chain is Peptide methionine sulfoxide reductase MsrA (188 aa).

Positions 1–25 are disordered; that stretch reads MEGNEKAEQKNATSEESTDIFENPG. Cysteine 37 is an active-site residue.

It belongs to the MsrA Met sulfoxide reductase family.

It carries out the reaction L-methionyl-[protein] + [thioredoxin]-disulfide + H2O = L-methionyl-(S)-S-oxide-[protein] + [thioredoxin]-dithiol. The catalysed reaction is [thioredoxin]-disulfide + L-methionine + H2O = L-methionine (S)-S-oxide + [thioredoxin]-dithiol. In terms of biological role, has an important function as a repair enzyme for proteins that have been inactivated by oxidation. Catalyzes the reversible oxidation-reduction of methionine sulfoxide in proteins to methionine. The polypeptide is Peptide methionine sulfoxide reductase MsrA (Methanosarcina acetivorans (strain ATCC 35395 / DSM 2834 / JCM 12185 / C2A)).